A 140-amino-acid polypeptide reads, in one-letter code: Ubiquitin-like protein ATG12 (140 aa).

The disordered stretch occupies residues 1-52; that stretch reads MAEEPQTVLQLPPSSAAGGEGLTDVSPETTTPEPPSSAAVSPGTEEPAGDTK. Low complexity predominate over residues 25–42; sequence VSPETTTPEPPSSAAVSP. Residue G140 forms a Glycyl lysine isopeptide (Gly-Lys) (interchain with K-? in acceptor protein) linkage.

The protein belongs to the ATG12 family. As to quaternary structure, forms a conjugate with ATG5. Part of the minor complex composed of 4 sets of ATG12-ATG5 and ATG16L1 (400 kDa); this complex interacts with ATG3 leading to disruption of ATG7 interaction and promotion of ATG8-like proteins lipidation. Forms an 800-kDa complex composed of ATG12-ATG5 and ATG16L2. Interacts with DHX58/RIG-1, IFIH1/MDA5 and MAVS/IPS-1 in monomeric form as well as in ATG12-ATG5 conjugate. The interaction with MAVS is further enhanced upon vesicular stomatitis virus (VSV) infection. Interacts with ATG3; this interaction is essential for phosphatidylethanolamine (PE)-conjugated ATG8-like proteins formation. Interacts with ATG7. Interacts with ATG10. Interacts with TECPR1. Interacts with SH3BGRL. The ATG12-ATG5 conjugate interacts with PDCD6IP (via the BRO1 domain); this interaction is bridged by ATG12 and promotes multiple PDCD6IP-mediated functions such as endolysosomal trafficking, macroautophagy and exosome biogenesis. In terms of processing, acetylated by EP300.

It localises to the cytoplasm. The protein resides in the preautophagosomal structure membrane. In terms of biological role, ubiquitin-like protein involved in autophagy vesicles formation. Conjugation with ATG5 through a ubiquitin-like conjugating system involving also ATG7 as an E1-like activating enzyme and ATG10 as an E2-like conjugating enzyme, is essential for its function. The ATG12-ATG5 conjugate acts as an E3-like enzyme which is required for lipidation of ATG8 family proteins and their association to the vesicle membranes. The ATG12-ATG5 conjugate also negatively regulates the innate antiviral immune response by blocking the type I IFN production pathway through direct association with RARRES3 and MAVS. Also plays a role in translation or delivery of incoming viral RNA to the translation apparatus. As part of the ATG8 conjugation system with ATG5 and ATG16L1, required for recruitment of LRRK2 to stressed lysosomes and induction of LRRK2 kinase activity in response to lysosomal stress. This Pongo abelii (Sumatran orangutan) protein is Ubiquitin-like protein ATG12.